Here is a 409-residue protein sequence, read N- to C-terminus: Small ribosomal subunit protein mS47 (409 aa).

Residues 1–26 (MQTVKALRRVSEPLQWVRSVSYGRRF) constitute a mitochondrion transit peptide. A disordered region spans residues 388-409 (ASELDDSDSELKLPTAQREPYF).

Belongs to the enoyl-CoA hydratase/isomerase family. Mitochondrion-specific ribosomal protein mS47 subfamily. Component of the mitochondrial ribosome small subunit.

The protein resides in the mitochondrion. The protein is Small ribosomal subunit protein mS47 of Arabidopsis thaliana (Mouse-ear cress).